Consider the following 239-residue polypeptide: U-scoloptoxin(11)-Sm3a (239 aa).

Positions 1–16 (MINFLLLVLILSVLES) are cleaved as a signal peptide.

It belongs to the scoloptoxin-11 family. In terms of processing, contains 9 disulfide bonds. In terms of tissue distribution, expressed by the venom gland.

It localises to the secreted. The protein is U-scoloptoxin(11)-Sm3a of Scolopendra morsitans (Tanzanian blue ringleg centipede).